A 251-amino-acid chain; its full sequence is Imidazole glycerol phosphate synthase subunit HisF (251 aa).

Catalysis depends on residues Asp-11 and Asp-130.

This sequence belongs to the HisA/HisF family. As to quaternary structure, heterodimer of HisH and HisF.

The protein localises to the cytoplasm. The enzyme catalyses 5-[(5-phospho-1-deoxy-D-ribulos-1-ylimino)methylamino]-1-(5-phospho-beta-D-ribosyl)imidazole-4-carboxamide + L-glutamine = D-erythro-1-(imidazol-4-yl)glycerol 3-phosphate + 5-amino-1-(5-phospho-beta-D-ribosyl)imidazole-4-carboxamide + L-glutamate + H(+). It functions in the pathway amino-acid biosynthesis; L-histidine biosynthesis; L-histidine from 5-phospho-alpha-D-ribose 1-diphosphate: step 5/9. Its function is as follows. IGPS catalyzes the conversion of PRFAR and glutamine to IGP, AICAR and glutamate. The HisF subunit catalyzes the cyclization activity that produces IGP and AICAR from PRFAR using the ammonia provided by the HisH subunit. This is Imidazole glycerol phosphate synthase subunit HisF from Thiobacillus denitrificans (strain ATCC 25259 / T1).